Reading from the N-terminus, the 591-residue chain is CTP synthase 1 (591 aa).

A Glutamine amidotransferase type-1 domain is found at 300–554; that stretch reads SIALVGKYTK…LAAAGRLQSY (255 aa). Active-site for GATase activity residues include cysteine 399, histidine 526, and glutamate 528. Serine 571 and serine 575 each carry phosphoserine.

It belongs to the CTP synthase family.

The enzyme catalyses UTP + L-glutamine + ATP + H2O = CTP + L-glutamate + ADP + phosphate + 2 H(+). Its pathway is pyrimidine metabolism; CTP biosynthesis via de novo pathway; CTP from UDP: step 2/2. Its function is as follows. This enzyme is involved in the de novo synthesis of CTP, a precursor of DNA, RNA and phospholipids. Catalyzes the ATP-dependent amination of UTP to CTP with either L-glutamine or ammonia as a source of nitrogen. This chain is CTP synthase 1 (ctps1), found in Danio rerio (Zebrafish).